The sequence spans 535 residues: tRNA-2-methylthio-N(6)-dimethylallyladenosine synthase (535 aa).

The MTTase N-terminal domain occupies 24 to 139; it reads RTYEVRTFGC…LPRLLERARH (116 aa). [4Fe-4S] cluster is bound by residues Cys33, Cys68, Cys102, Cys176, Cys180, and Cys183. Residues 162–392 form the Radical SAM core domain; that stretch reads RDSSFSGWVS…IALQERISLE (231 aa). The TRAM domain maps to 395 to 465; that stretch reads EKLIGRDVEL…PHYLIADAAG (71 aa). Residues 512-535 form a disordered region; sequence RTREPLTSPGVGTMPLYDPTDGQR.

It belongs to the methylthiotransferase family. MiaB subfamily. Monomer. [4Fe-4S] cluster is required as a cofactor.

The protein localises to the cytoplasm. It catalyses the reaction N(6)-dimethylallyladenosine(37) in tRNA + (sulfur carrier)-SH + AH2 + 2 S-adenosyl-L-methionine = 2-methylsulfanyl-N(6)-dimethylallyladenosine(37) in tRNA + (sulfur carrier)-H + 5'-deoxyadenosine + L-methionine + A + S-adenosyl-L-homocysteine + 2 H(+). Its function is as follows. Catalyzes the methylthiolation of N6-(dimethylallyl)adenosine (i(6)A), leading to the formation of 2-methylthio-N6-(dimethylallyl)adenosine (ms(2)i(6)A) at position 37 in tRNAs that read codons beginning with uridine. The chain is tRNA-2-methylthio-N(6)-dimethylallyladenosine synthase from Leifsonia xyli subsp. xyli (strain CTCB07).